The chain runs to 317 residues: MLSRLLRDDKLLEVFFSSLDMKKSYLLALSGGSDSLFLLYLLKSRGVAFTAVHVDHGWRESSYREAEELKIRCEEEGIPILIDHVPPEYRTSRDPENAARRYRYTLFHKVCKEQNLAGIFLAHHANDQAETVLKRLLEGASLSNLKGMSPKTSYEDIPLFRPLLHIPKQIIINVLDAENVPCVQDITNTDERYLRARMRKKIFPWLEEIFGKNITQPLLTLAQDSEELSCYMKQQAEPFLENMRKENTTWSIEIPQVLIEQVFLTKWVCKEFFFRAGVVASRHFLQTVYDHLQRKLPAQMRLRDKRVIIKAGVVMIE.

30-35 (SGGSDS) is an ATP binding site.

Belongs to the tRNA(Ile)-lysidine synthase family.

Its subcellular location is the cytoplasm. The catalysed reaction is cytidine(34) in tRNA(Ile2) + L-lysine + ATP = lysidine(34) in tRNA(Ile2) + AMP + diphosphate + H(+). Ligates lysine onto the cytidine present at position 34 of the AUA codon-specific tRNA(Ile) that contains the anticodon CAU, in an ATP-dependent manner. Cytidine is converted to lysidine, thus changing the amino acid specificity of the tRNA from methionine to isoleucine. The sequence is that of tRNA(Ile)-lysidine synthase from Chlamydia caviae (strain ATCC VR-813 / DSM 19441 / 03DC25 / GPIC) (Chlamydophila caviae).